The chain runs to 257 residues: Thioredoxin-dependent peroxide reductase, mitochondrial (257 aa).

The transit peptide at 1-62 (MAAAAGRLLW…FAFSTSSSFH (62 aa)) directs the protein to the mitochondrion. Residues 64 to 222 (PAVTQHAPHF…PLRLVKAFQF (159 aa)) form the Thioredoxin domain. K84 is subject to N6-succinyllysine. K92 carries the N6-acetyllysine; alternate modification. K92 bears the N6-succinyllysine; alternate mark. The active-site Cysteine sulfenic acid (-SOH) intermediate is the C109. Position 147 is a phosphothreonine (T147).

This sequence belongs to the peroxiredoxin family. AhpC/Prx1 subfamily. Homodimer; disulfide-linked, upon oxidation. 6 homodimers assemble to form a ring-like dodecamer. Interacts with NEK6. Interacts with LRRK2. Interacts with MAP3K13. Interacts with RPS6KC1 (via PX domain). Post-translationally, phosphorylated by LRRK2; phosphorylation reduces perodixase activity. The enzyme can be inactivated by further oxidation of the cysteine sulfenic acid (C(P)-SOH) to sulphinic acid (C(P)-SO2H) and sulphonic acid (C(P)-SO3H) instead of its condensation to a disulfide bond. In terms of processing, S-palmitoylated. In terms of tissue distribution, ubiquitous.

The protein localises to the mitochondrion. It is found in the cytoplasm. The protein resides in the early endosome. It catalyses the reaction a hydroperoxide + [thioredoxin]-dithiol = an alcohol + [thioredoxin]-disulfide + H2O. Thiol-specific peroxidase that catalyzes the reduction of hydrogen peroxide and organic hydroperoxides to water and alcohols, respectively. Plays a role in cell protection against oxidative stress by detoxifying peroxides. Acts synergistically with MAP3K13 to regulate the activation of NF-kappa-B in the cytosol. Required for the maintenance of physical strength. The sequence is that of Thioredoxin-dependent peroxide reductase, mitochondrial (Prdx3) from Rattus norvegicus (Rat).